The chain runs to 240 residues: Ubiquinone biosynthesis O-methyltransferase (240 aa).

S-adenosyl-L-methionine-binding residues include R44, G64, D85, and M129.

This sequence belongs to the methyltransferase superfamily. UbiG/COQ3 family.

The enzyme catalyses a 3-demethylubiquinol + S-adenosyl-L-methionine = a ubiquinol + S-adenosyl-L-homocysteine + H(+). The catalysed reaction is a 3-(all-trans-polyprenyl)benzene-1,2-diol + S-adenosyl-L-methionine = a 2-methoxy-6-(all-trans-polyprenyl)phenol + S-adenosyl-L-homocysteine + H(+). Its pathway is cofactor biosynthesis; ubiquinone biosynthesis. Its function is as follows. O-methyltransferase that catalyzes the 2 O-methylation steps in the ubiquinone biosynthetic pathway. This is Ubiquinone biosynthesis O-methyltransferase from Escherichia coli O7:K1 (strain IAI39 / ExPEC).